The chain runs to 388 residues: Leucine aminopeptidase 1 (388 aa).

An N-terminal signal peptide occupies residues 1-19 (MKLPALLILGVAASTMVLA). The propeptide occupies 20–88 (AIAPDQVPLN…LPKVFPTPAV (69 aa)). 5 N-linked (GlcNAc...) asparagine glycosylation sites follow: Asn96, Asn119, Asn149, Asn164, and Asn181. Residues His189 and Asp207 each contribute to the Zn(2+) site. An N-linked (GlcNAc...) asparagine glycan is attached at Asn232. 2 residues coordinate Zn(2+): Glu246 and Asp273. Cys322 and Cys326 are joined by a disulfide. His355 serves as a coordination point for Zn(2+).

It belongs to the peptidase M28 family. M28E subfamily. As to quaternary structure, monomer. The cofactor is Zn(2+).

The protein localises to the secreted. In terms of biological role, extracellular aminopeptidase that allows assimilation of proteinaceous substrates. The sequence is that of Leucine aminopeptidase 1 (LAP1) from Paracoccidioides brasiliensis (strain Pb03).